A 308-amino-acid chain; its full sequence is Ferrochelatase (308 aa).

2 residues coordinate Fe cation: His-167 and Glu-239.

This sequence belongs to the ferrochelatase family.

It is found in the cytoplasm. The catalysed reaction is heme b + 2 H(+) = protoporphyrin IX + Fe(2+). It functions in the pathway porphyrin-containing compound metabolism; protoheme biosynthesis; protoheme from protoporphyrin-IX: step 1/1. Catalyzes the ferrous insertion into protoporphyrin IX. The polypeptide is Ferrochelatase (Thermoplasma acidophilum (strain ATCC 25905 / DSM 1728 / JCM 9062 / NBRC 15155 / AMRC-C165)).